Consider the following 291-residue polypeptide: Acetyl-coenzyme A carboxylase carboxyl transferase subunit beta (291 aa).

The CoA carboxyltransferase N-terminal domain maps to 34–291 (MWTKCSNCNN…LILHGVNKYE (258 aa)). Positions 38, 41, 57, and 60 each coordinate Zn(2+). The C4-type zinc finger occupies 38–60 (CSNCNNMIYYEDLENNKYVCTKC).

It belongs to the AccD/PCCB family. Acetyl-CoA carboxylase is a heterohexamer composed of biotin carboxyl carrier protein (AccB), biotin carboxylase (AccC) and two subunits each of ACCase subunit alpha (AccA) and ACCase subunit beta (AccD). It depends on Zn(2+) as a cofactor.

The protein localises to the cytoplasm. It carries out the reaction N(6)-carboxybiotinyl-L-lysyl-[protein] + acetyl-CoA = N(6)-biotinyl-L-lysyl-[protein] + malonyl-CoA. Its pathway is lipid metabolism; malonyl-CoA biosynthesis; malonyl-CoA from acetyl-CoA: step 1/1. Functionally, component of the acetyl coenzyme A carboxylase (ACC) complex. Biotin carboxylase (BC) catalyzes the carboxylation of biotin on its carrier protein (BCCP) and then the CO(2) group is transferred by the transcarboxylase to acetyl-CoA to form malonyl-CoA. The protein is Acetyl-coenzyme A carboxylase carboxyl transferase subunit beta of Clostridium botulinum (strain Eklund 17B / Type B).